Reading from the N-terminus, the 207-residue chain is Large ribosomal subunit protein uL4 (207 aa).

It belongs to the universal ribosomal protein uL4 family. In terms of assembly, part of the 50S ribosomal subunit.

One of the primary rRNA binding proteins, this protein initially binds near the 5'-end of the 23S rRNA. It is important during the early stages of 50S assembly. It makes multiple contacts with different domains of the 23S rRNA in the assembled 50S subunit and ribosome. Its function is as follows. Forms part of the polypeptide exit tunnel. This Rickettsia rickettsii (strain Iowa) protein is Large ribosomal subunit protein uL4.